The following is a 982-amino-acid chain: Capsid protein (982 aa).

2 disordered regions span residues 592–613 and 628–655; these read VFRS…RWLT and EPPA…HEEE. Over residues 597-613 the composition is skewed to basic and acidic residues; sequence PRRESTTTTDDSPRWLT. The segment covering 635-649 has biased composition (polar residues); it reads GRSSSPVTSSISEGT.

In terms of assembly, homomultimer.

It is found in the virion. Functionally, capsid protein self-assembles to form an icosahedral capsid with a T=1 symmetry, about 35-40 nm in diameter. This Penicillium chrysogenum virus (isolate Caston/2003) (PcV) protein is Capsid protein (p2).